The primary structure comprises 673 residues: Potassium voltage-gated channel subfamily KQT member 1 (673 aa).

Disordered stretches follow at residues 1 to 28 (MAAATSPPRAERKRWGGGRLPGARRGSA) and 61 to 80 (GPSSPAAPAASPAAADLGPR). Residues 1–118 (MAAATSPPRA…YNFLERPTGW (118 aa)) lie on the Cytoplasmic side of the membrane. Residue S27 is modified to Phosphoserine. Positions 66–75 (AAPAASPAAA) are enriched in low complexity. A helical transmembrane segment spans residues 119–140 (KCFVYHFAVFLIVLVCLIFSVL). Over 141–151 (STIEQYVALAT) the chain is Extracellular. The helical transmembrane segment at 152 to 174 (GTLFWMEIVLVVFFGTEYAVRLW) threads the bilayer. The Cytoplasmic segment spans residues 175 to 190 (SAGCRSKYVGIWGRLR). A helical transmembrane segment spans residues 191–216 (FARKPISIIDLIVVVASMVVLCVGSK). At 217–224 (GQVFATSA) the chain is on the extracellular side. The chain crosses the membrane as a helical; Voltage-sensor span at residues 225 to 240 (IRGIRFLQILRMLHVD). The segment at 236–244 (MLHVDRQGG) is interaction with KCNE3. Topologically, residues 241-258 (RQGGTWRLLGSVVFIHRQ) are cytoplasmic. Position 242 (Q242) interacts with a 1,2-diacyl-sn-glycero-3-phospho-(1D-myo-inositol-4,5-bisphosphate). A helical membrane pass occupies residues 259 to 281 (ELITTLYIGFLGLIFSSYFVYLA). The Extracellular portion of the chain corresponds to 282–297 (EKDAVNESGQVEFGSY). N287 is a glycosylation site (N-linked (GlcNAc...) asparagine). The pore-forming intramembrane region spans 298-318 (ADALWWGVVTVTTIGYGDKVP). The Extracellular portion of the chain corresponds to 319-320 (QT). A helical transmembrane segment spans residues 321–346 (WVGKTIASCFSVFAISFFALPAGILG). At 347–673 (SGFALKVQQK…VPGRGPEEGS (327 aa)) the chain is on the cytoplasmic side. Residues 368–380 (AAASLIQTAWRCY) are interaction with CALM. S405 and S407 each carry phosphoserine. The interval 514 to 528 (KVIRRMQYFVAKKKF) is interaction with CALM; calcium-dependent. The tract at residues 534–571 (PYDVRDVIEQYSQGHLNLMVRIKELQRRLDQSIGRPAL) is interaction with KCNE1 C-terminus. The interval 587-615 (IGARLNRVEDKVTQLDQRLELITDMLQQL) is interaction with AKAP9. The interval 588–619 (GARLNRVEDKVTQLDQRLELITDMLQQLLSLH) is C-terminal assembly domain (tetramerization). Residues 619–673 (HRGGTPGSRAPGGGGAQVAQPCSGGSINPELFLPSNALPTYEQLTVPGRGPEEGS) are disordered. A compositionally biased stretch (gly residues) spans 622-634 (GTPGSRAPGGGGA).

This sequence belongs to the potassium channel family. KQT (TC 1.A.1.15) subfamily. Kv7.1/KCNQ1 sub-subfamily. As to quaternary structure, tetramer. Heterotetramer with KCNE1; targets to the membrane raft. Interacts (via C-terminus) with CALM; forms a heterooctameric structure (with 4:4 KCNQ1:CALM stoichiometry) in a calcium-independent manner. Interacts with AKAP9; targets protein kinase A (PKA) catalytic and regulatory subunits and protein phosphatase 1 (PP1) to the KCNQ1-KCNE1 complex, allowing PKA-mediated phosphorylation and increase of delayed rectifier potassium channel activity. Interacts with KCNE2; form a heterooligomer complex that targets to the membrane raft and leading to currents with an apparently instantaneous activation, a rapid deactivation process and a linear current-voltage relationship and decreases the amplitude of the outward current. Interacts with AP2M1; mediates estrogen-induced internalization via clathrin-coated vesicles. Interacts with NEDD4L; promotes internalization and decreases I(Ks) currents. Interacts with USP2; counteracts the NEDD4L-specific down-regulation of I(Ks) and restore plasma membrane localization. Heterotetramer with KCNQ5; has a voltage-gated potassium channel activity. Interacts with KCNE3; four KCNE3 molecules are bound to one KCNQ1 tetramer (4:4 KCNQ1:KCNE3 stoichiometry); alters membrane raft localization; affects KCNQ1 structure and gating properties. Interacts with KCNE4; impairs KCNQ1 localization in lipid rafts and inhibits voltage-gated potassium channel activity. Interacts with KCNE5; impairs KCNQ1 localization in lipid rafts and only conducts current upon strong and continued depolarization. Interacts with SLC5A3; forms coregulatory channel-transporter complexes that modulate Na(+)-coupled myo-inositol influx through the transporter. In terms of processing, ubiquitinated by NEDD4L; promotes internalization. The ubiquitinylated form is internalized through a clathrin-mediated endocytosis by interacting with AP2M1 and is recycled back to the cell membrane via RAB4A and RAB11A. Post-translationally, deubiquitinated by USP2; counteracts the NEDD4L-specific down-regulation of I(Ks) and restores the membrane localization.

Its subcellular location is the cell membrane. It is found in the cytoplasmic vesicle membrane. The protein resides in the early endosome. It localises to the membrane raft. The protein localises to the endoplasmic reticulum. Its subcellular location is the basolateral cell membrane. It is found in the apical cell membrane. It carries out the reaction K(+)(in) = K(+)(out). Its activity is regulated as follows. PIP2 molecule is essential to activate KCNQ channels by inducing the coupling of the voltage-sensing domain (VSD) and the pore-forming domain (PD). Upon channel activation, PIP2 disrupts the VSD-calmodulin/CALM interactions, causing the release of CALM from the VSD which triggers the opening of the gate. Calcium potentiates KCNQ1 channel current through calcium-bound CALM. Calcium-bound CALM competes with PIP2 to stabilize the channel open state. Its function is as follows. Pore-forming subunit of the voltage-gated potassium (Kv) channel involved in the regulation of cardiomyocyte excitability and important in normal development and functions of myocardium, inner ear, stomach and colon. Associates with KCNE beta subunits that modulates current kinetics. Induces a voltage-dependent by rapidly activating and slowly deactivating potassium-selective outward current. Also promotes a delayed voltage activated potassium current showing outward rectification characteristic. During beta-adrenergic receptor stimulation participates in cardiac repolarization by associating with KCNE1 to form the I(Ks) cardiac potassium current that increases the amplitude and slows down the activation kinetics of outward potassium current I(Ks). Muscarinic agonist oxotremorine-M strongly suppresses KCNQ1/KCNE1 current. When associated with KCNE3, forms the potassium channel that is important for cyclic AMP-stimulated intestinal secretion of chloride ions. This interaction with KCNE3 is reduced by 17beta-estradiol, resulting in the reduction of currents. During conditions of increased substrate load, maintains the driving force for proximal tubular and intestinal sodium ions absorption, gastric acid secretion, and cAMP-induced jejunal chloride ions secretion. Allows the provision of potassium ions to the luminal membrane of the secretory canaliculus in the resting state as well as during stimulated acid secretion. When associated with KCNE2, forms a heterooligomer complex leading to currents with an apparently instantaneous activation, a rapid deactivation process and a linear current-voltage relationship and decreases the amplitude of the outward current. When associated with KCNE4, inhibits voltage-gated potassium channel activity. When associated with KCNE5, this complex only conducts current upon strong and continued depolarization. Also forms a heterotetramer with KCNQ5 that has a voltage-gated potassium channel activity. Binds with phosphatidylinositol 4,5-bisphosphate. KCNQ1-KCNE2 channel associates with Na(+)-coupled myo-inositol symporter in the apical membrane of choroid plexus epithelium and regulates the myo-inositol gradient between blood and cerebrospinal fluid with an impact on neuron excitability. This is Potassium voltage-gated channel subfamily KQT member 1 from Sus scrofa (Pig).